The following is a 296-amino-acid chain: Ribosomal RNA small subunit methyltransferase A (296 aa).

The S-adenosyl-L-methionine site is built by Asn30, Leu32, Gly57, Glu78, Asp103, and Asn128.

This sequence belongs to the class I-like SAM-binding methyltransferase superfamily. rRNA adenine N(6)-methyltransferase family. RsmA subfamily.

The protein localises to the cytoplasm. It catalyses the reaction adenosine(1518)/adenosine(1519) in 16S rRNA + 4 S-adenosyl-L-methionine = N(6)-dimethyladenosine(1518)/N(6)-dimethyladenosine(1519) in 16S rRNA + 4 S-adenosyl-L-homocysteine + 4 H(+). Specifically dimethylates two adjacent adenosines (A1518 and A1519) in the loop of a conserved hairpin near the 3'-end of 16S rRNA in the 30S particle. May play a critical role in biogenesis of 30S subunits. The polypeptide is Ribosomal RNA small subunit methyltransferase A (Staphylococcus haemolyticus (strain JCSC1435)).